Consider the following 292-residue polypeptide: MDFLNDHINVFGLIAALVILVLTIYESSSLIKEMRDSKSQGELMENGHLIDGIGEFANNVPVGWIASFMCTIVWAFWYFFFGYPLNSFSQIGQYNEEVKAHNQKFEAKWKNLGQKELVDMGQGIFLVHCSQCHGITAEGLHGSAQNLVRWGKEEGIMDTIKHGSKGMDYLAGEMPAMELDEKDAKAIASYVMAEISSVKKTKNPQLIDKGKELFESMGCTGCHGNDGKGLQENQVLAADLTTYGTENFLRNILTHGKKGNIGHMPSFKYKNFSDLQVKALPEFIQSLKPLED.

2 consecutive transmembrane segments (helical) span residues 11-31 and 62-82; these read FGLI…SSLI and VGWI…FFFG. Cytochrome c domains lie at 116-195 and 205-288; these read ELVD…MAEI and QLID…QSLK. Positions 129, 132, 133, 174, 219, 222, 223, and 264 each coordinate heme c.

This sequence belongs to the CcoP / FixP family. Component of the cbb3-type cytochrome c oxidase at least composed of CcoN, CcoO, CcoQ and CcoP. Requires heme c as cofactor.

Its subcellular location is the cell inner membrane. It participates in energy metabolism; oxidative phosphorylation. In terms of biological role, C-type cytochrome. Part of the cbb3-type cytochrome c oxidase complex. CcoP subunit is required for transferring electrons from donor cytochrome c via its heme groups to CcoO subunit. From there, electrons are shuttled to the catalytic binuclear center of CcoN subunit where oxygen reduction takes place. The complex also functions as a proton pump. The protein is Cbb3-type cytochrome c oxidase subunit CcoP of Helicobacter pylori (Campylobacter pylori).